The following is a 368-amino-acid chain: Flagellar P-ring protein (368 aa).

The signal sequence occupies residues 1 to 24 (MTLTRPLALISALAALILALPADA).

Belongs to the FlgI family. The basal body constitutes a major portion of the flagellar organelle and consists of four rings (L,P,S, and M) mounted on a central rod.

Its subcellular location is the periplasm. The protein localises to the bacterial flagellum basal body. In terms of biological role, assembles around the rod to form the L-ring and probably protects the motor/basal body from shearing forces during rotation. This is Flagellar P-ring protein from Methylobacillus flagellatus (strain ATCC 51484 / DSM 6875 / VKM B-1610 / KT).